The chain runs to 151 residues: Large ribosomal subunit protein bL9 (151 aa).

The protein belongs to the bacterial ribosomal protein bL9 family.

Binds to the 23S rRNA. This chain is Large ribosomal subunit protein bL9, found in Francisella tularensis subsp. holarctica (strain LVS).